Consider the following 480-residue polypeptide: ATP synthase subunit beta (480 aa).

153–160 (GGAGVGKT) contributes to the ATP binding site.

The protein belongs to the ATPase alpha/beta chains family. F-type ATPases have 2 components, CF(1) - the catalytic core - and CF(0) - the membrane proton channel. CF(1) has five subunits: alpha(3), beta(3), gamma(1), delta(1), epsilon(1). CF(0) has three main subunits: a(1), b(2) and c(9-12). The alpha and beta chains form an alternating ring which encloses part of the gamma chain. CF(1) is attached to CF(0) by a central stalk formed by the gamma and epsilon chains, while a peripheral stalk is formed by the delta and b chains.

Its subcellular location is the cell membrane. It carries out the reaction ATP + H2O + 4 H(+)(in) = ADP + phosphate + 5 H(+)(out). In terms of biological role, produces ATP from ADP in the presence of a proton gradient across the membrane. The catalytic sites are hosted primarily by the beta subunits. This is ATP synthase subunit beta from Lactobacillus johnsonii (strain CNCM I-12250 / La1 / NCC 533).